The primary structure comprises 263 residues: Dermonecrotic toxin SpaSicTox-betaIF1 (263 aa).

Residues Glu-15 and Asp-17 each coordinate Mg(2+). His-31 acts as the Nucleophile in catalysis. Cystine bridges form between Cys-35–Cys-41 and Cys-37–Cys-179. Asp-75 lines the Mg(2+) pocket.

Belongs to the arthropod phospholipase D family. Class II subfamily. The cofactor is Mg(2+). In terms of tissue distribution, expressed by the venom gland.

The protein localises to the secreted. It carries out the reaction an N-(acyl)-sphingosylphosphocholine = an N-(acyl)-sphingosyl-1,3-cyclic phosphate + choline. It catalyses the reaction an N-(acyl)-sphingosylphosphoethanolamine = an N-(acyl)-sphingosyl-1,3-cyclic phosphate + ethanolamine. The enzyme catalyses a 1-acyl-sn-glycero-3-phosphocholine = a 1-acyl-sn-glycero-2,3-cyclic phosphate + choline. The catalysed reaction is a 1-acyl-sn-glycero-3-phosphoethanolamine = a 1-acyl-sn-glycero-2,3-cyclic phosphate + ethanolamine. Functionally, dermonecrotic toxins cleave the phosphodiester linkage between the phosphate and headgroup of certain phospholipids (sphingolipid and lysolipid substrates), forming an alcohol (often choline) and a cyclic phosphate. This toxin acts on sphingomyelin (SM). It may also act on ceramide phosphoethanolamine (CPE), lysophosphatidylcholine (LPC) and lysophosphatidylethanolamine (LPE), but not on lysophosphatidylserine (LPS), and lysophosphatidylglycerol (LPG). It acts by transphosphatidylation, releasing exclusively cyclic phosphate products as second products. Induces dermonecrosis, hemolysis, increased vascular permeability, edema, inflammatory response, and platelet aggregation. This Sicarius patagonicus (Six-eyed sand spider) protein is Dermonecrotic toxin SpaSicTox-betaIF1.